The sequence spans 195 residues: ATP-dependent Clp protease proteolytic subunit (195 aa).

Ser-99 functions as the Nucleophile in the catalytic mechanism. His-124 is an active-site residue.

The protein belongs to the peptidase S14 family. In terms of assembly, fourteen ClpP subunits assemble into 2 heptameric rings which stack back to back to give a disk-like structure with a central cavity, resembling the structure of eukaryotic proteasomes.

The protein resides in the cytoplasm. The catalysed reaction is Hydrolysis of proteins to small peptides in the presence of ATP and magnesium. alpha-casein is the usual test substrate. In the absence of ATP, only oligopeptides shorter than five residues are hydrolyzed (such as succinyl-Leu-Tyr-|-NHMec, and Leu-Tyr-Leu-|-Tyr-Trp, in which cleavage of the -Tyr-|-Leu- and -Tyr-|-Trp bonds also occurs).. In terms of biological role, cleaves peptides in various proteins in a process that requires ATP hydrolysis. Has a chymotrypsin-like activity. Plays a major role in the degradation of misfolded proteins. The sequence is that of ATP-dependent Clp protease proteolytic subunit from Coxiella burnetii (strain CbuG_Q212) (Coxiella burnetii (strain Q212)).